We begin with the raw amino-acid sequence, 1562 residues long: MSFGGINTFQQYNTDLGLGHNGVRISLNYFDGLPDPSLLNSLYSNELKLIFKSLLKRDETTKEKALMDLSNLISDFNQNEYFFNDIFLLCWSQIYAKLIISDYKVIRLQSHQITIMLVKSLRKKISKFLKDFIPLILLGTCELDYSVSKPSLNELTECFNKDPAKINALWAVFQEQLLNLVKEIVVNENEDTISDERYSSKEESEFRYHRVIASAVLLLIKLFVHNKDVSERNSSSLKVILSDESIWKLLNLKNGQNTNAYETVLRLIDVLYTRGYMPSHKNIMKLAVKKLLKSLTHITSKNILKVCPVLPSILNLLATLDDYEDGTIWSYDKSSKEKVLKFLSVSRTSPSPGFFNAVFALYSSTKRHSFLDYYLEWLPFWQKSVQRLNEKGFSARNSAEVLNEFWTNFLKFAEDSSEERVKKMVESEIFNSLSCGKSLSEYTKLNQTLSGVFPPDKWEREIEDYFTSDEDIRKIKVSFEKNLFALLVTSPNNESAISRLFDFFVQLIETDPSNVFNKYDGVYDALNYFLDSDMIFLNGKIGKFINEIPTLVQESTYQNFAGIMAQYSNSKFFKMNTDAITSLEDFFIVALSFNLPKTIILATMNELDNDIYQQLMKSDSLELELYIEDFMKNYKFDDSGEIFKGNNKFLNQRTITTLYRSAVANGQVEQFCAVLSKLDETFFSTLLLNTDFLSCALYEVSEDTNEKLFKLSLQLAKGNSEIANKLAQVILQHAQVYFSPGAKEKYVTHAVELINGCNDTSQIFFPANAIEVFARYMPAIDYRSSLVSSLSTNTHLLLTDDKPINLKNMQKLIRYALFLDALLDALPERVNNHIVAFITVVSELVTDYNCLSEEPNDLYYDFGHTFFKHGKVNLNFSDIVGNVIQPANGGDAMLTFDIAESNSVYFFYYSRVLYKVLLNSIDTVSSTTLNGLLASVESFVTKTVRDQKSTDKDYLLCAILLLMFNRSNSKDEITKLRTLLASQLIGIREVELVDQEFKSLALLNNLLDIPQADKQFVPIAPQRLNMIFRSILKWLDSDLAYEPSFSTVRLLLLDFFTKLMRFEGVRDMGITAFELSERLLADSLSMCQIDDTLYLLELRSSCLNLYETLSQGVSKNGEEISEYGDEIQENLIELMFLNFNQERNNQVSTLFYQKLYKVISSMELKKLESQYKRIFEVVLNDKDIGSNINQSRLLTTLLGSLVVKTQQDIIIEYELRIQKQTGSDVDGSASDNDVNSKFKLPQKLLQKVTDEVPKEYLEYENKNSFIKYLWYWHLILMYFKDTSYNMRQIFIEQLKEAGLINRMFDFITDQIDLRDTEFWKQVDTKEISEYNIVGNNFSPYKEDIFEECKKLLGHTLYQLFNNVGCLTSIWWLNIKDRTLQNDIEKFVSEFISPILIKNEFDDINSKMDRLTSNDDALTIKLNNITNEVKASYLIDDQKLEISFKLPKNYPLTNIQVNGVSRVGISEQKWKQWIMSTQHVITGMNGSVLDSLELFTKNVHLQFSGFEECAICYSILHAVDRKLPSKTCPTCKNKFHGACLYKWFRSSGNNTCPLCRSEIPFRR.

HEAT repeat units follow at residues 41 to 78 (SLYSNELKLIFKSLLKRDETTKEKALMDLSNLISDFNQ), 127 to 164 (KFLKDFIPLILLGTCELDYSVSKPSLNELTECFNKDPA), 175 to 217 (EQLL…SAVL), 262 to 301 (ETVLRLIDVLYTRGYMPSHKNIMKLAVKKLLKSLTHITSK), 304 to 348 (LKVC…VSRT), 495 to 532 (SAISRLFDFFVQLIETDPSNVFNKYDGVYDALNYFLDS), 555 to 592 (STYQNFAGIMAQYSNSKFFKMNTDAITSLEDFFIVALS), 813 to 850 (IRYALFLDALLDALPERVNNHIVAFITVVSELVTDYNC), 908 to 945 (YYSRVLYKVLLNSIDTVSSTTLNGLLASVESFVTKTVR), 997 to 1037 (FKSL…WLDS), 1047 to 1085 (TVRLLLLDFFTKLMRFEGVRDMGITAFELSERLLADSLS), 1188 to 1226 (INQSRLLTTLLGSLVVKTQQDIIIEYELRIQKQTGSDVD), 1263 to 1298 (NSFIKYLWYWHLILMYFKDTSYNMRQIFIEQLKEAG), and 1299 to 1339 (LINR…NFSP). An RING-type zinc finger spans residues 1508 to 1555 (CAICYSILHAVDRKLPSKTCPTCKNKFHGACLYKWFRSSGNNTCPLCR).

This sequence belongs to the LTN1 family. Component of the ribosome quality control complex (RQC), composed of the E3 ubiquitin ligase RKR1/LTN1, RQC1 and RQC2, as well as CDC48 and its ubiquitin-binding cofactors associated with the 60S ribosomal subunits.

It is found in the nucleus. It localises to the cytoplasm. The protein resides in the cytosol. The enzyme catalyses S-ubiquitinyl-[E2 ubiquitin-conjugating enzyme]-L-cysteine + [acceptor protein]-L-lysine = [E2 ubiquitin-conjugating enzyme]-L-cysteine + N(6)-ubiquitinyl-[acceptor protein]-L-lysine.. It functions in the pathway protein modification; protein ubiquitination. Its function is as follows. E3 ubiquitin-protein ligase component of the ribosome quality control complex (RQC), a ribosome-associated complex that mediates ubiquitination and extraction of incompletely synthesized nascent chains for proteasomal degradation. Mediates ubiquitination of proteins derived from mRNAs lacking stop codons (non-stop proteins) and other translation arrest products induced by poly-lysine sequences and tandem rare codons. Ubiquitination leads to CDC48 recruitment for extraction and degradation of the incomplete translation product. May indirectly play a role in chromatin function and transcription. The sequence is that of E3 ubiquitin-protein ligase listerin from Saccharomyces cerevisiae (strain ATCC 204508 / S288c) (Baker's yeast).